The primary structure comprises 441 residues: Zinc finger and BTB domain-containing protein 26 (441 aa).

Positions 33–97 constitute a BTB domain; the sequence is CDVTVLIDDI…CYSGVLEFPE (65 aa). The segment at 134 to 177 is disordered; sequence DSKEGCEPQSASPQSKEQQGDARGSPKQDSPCIHPSEDSMDMED. A Glycyl lysine isopeptide (Lys-Gly) (interchain with G-Cter in SUMO2) cross-link involves residue Lys184. Residues 194–216 form a disordered region; sequence VRSKKDQNQFISSEPTALHSSEP. Positions 201 to 216 are enriched in polar residues; that stretch reads NQFISSEPTALHSSEP. Lys255 is covalently cross-linked (Glycyl lysine isopeptide (Lys-Gly) (interchain with G-Cter in SUMO2)). 4 C2H2-type zinc fingers span residues 273 to 295, 298 to 320, 326 to 348, and 354 to 377; these read HQCP…LKMH, FMCL…MRVH, FQCK…LNLH, and HKCN…KQLH. Lys329 is covalently cross-linked (Glycyl lysine isopeptide (Lys-Gly) (interchain with G-Cter in SUMO2)).

Ubiquitous.

Its subcellular location is the nucleus. May be involved in transcriptional regulation. In Homo sapiens (Human), this protein is Zinc finger and BTB domain-containing protein 26 (ZBTB26).